A 445-amino-acid polypeptide reads, in one-letter code: tRNA-2-methylthio-N(6)-dimethylallyladenosine synthase (445 aa).

In terms of domain architecture, MTTase N-terminal spans 3–120; that stretch reads RKLFIQTHGC…LPGLITQAAS (118 aa). Positions 12, 49, 83, 157, 161, and 164 each coordinate [4Fe-4S] cluster. One can recognise a Radical SAM core domain in the interval 143–375; it reads SVDGPSAFVS…QQRINQNVQD (233 aa). Positions 378–442 constitute a TRAM domain; it reads RKMVGSTQRI…SNSLLGTDPR (65 aa).

The protein belongs to the methylthiotransferase family. MiaB subfamily. In terms of assembly, monomer. [4Fe-4S] cluster is required as a cofactor.

It localises to the cytoplasm. It catalyses the reaction N(6)-dimethylallyladenosine(37) in tRNA + (sulfur carrier)-SH + AH2 + 2 S-adenosyl-L-methionine = 2-methylsulfanyl-N(6)-dimethylallyladenosine(37) in tRNA + (sulfur carrier)-H + 5'-deoxyadenosine + L-methionine + A + S-adenosyl-L-homocysteine + 2 H(+). Catalyzes the methylthiolation of N6-(dimethylallyl)adenosine (i(6)A), leading to the formation of 2-methylthio-N6-(dimethylallyl)adenosine (ms(2)i(6)A) at position 37 in tRNAs that read codons beginning with uridine. In Alcanivorax borkumensis (strain ATCC 700651 / DSM 11573 / NCIMB 13689 / SK2), this protein is tRNA-2-methylthio-N(6)-dimethylallyladenosine synthase.